The following is a 302-amino-acid chain: Sulfate adenylyltransferase subunit 2 (302 aa).

This sequence belongs to the PAPS reductase family. CysD subfamily. As to quaternary structure, heterodimer composed of CysD, the smaller subunit, and CysN.

It catalyses the reaction sulfate + ATP + H(+) = adenosine 5'-phosphosulfate + diphosphate. It functions in the pathway sulfur metabolism; hydrogen sulfide biosynthesis; sulfite from sulfate: step 1/3. In terms of biological role, with CysN forms the ATP sulfurylase (ATPS) that catalyzes the adenylation of sulfate producing adenosine 5'-phosphosulfate (APS) and diphosphate, the first enzymatic step in sulfur assimilation pathway. APS synthesis involves the formation of a high-energy phosphoric-sulfuric acid anhydride bond driven by GTP hydrolysis by CysN coupled to ATP hydrolysis by CysD. This is Sulfate adenylyltransferase subunit 2 from Serratia proteamaculans (strain 568).